The following is a 278-amino-acid chain: Msm operon regulatory protein (278 aa).

Positions 176 to 274 (NQVKKIIHSQ…GKSPSKFRKE (99 aa)) constitute an HTH araC/xylS-type domain. 2 consecutive DNA-binding regions (H-T-H motif) follow at residues 193–214 (NDIA…RKST) and 241–264 (IAEI…KNYF).

In terms of biological role, regulatory protein for the msm operon for multiple sugar metabolism. Activates the transcription of the msmEFGK, aga, dexB and gftA genes. The chain is Msm operon regulatory protein (msmR) from Streptococcus mutans serotype c (strain ATCC 700610 / UA159).